A 380-amino-acid polypeptide reads, in one-letter code: Putative heat stress transcription factor B-4a (380 aa).

The interval 216–245 is hydrophobic repeat HR-A/B; that stretch reads LLRGNAALVQELAHMRKLYSDIIYFVQNHV. 2 disordered regions span residues 268 to 296 and 314 to 380; these read PAGG…TVAE and INEV…VSPP. A compositionally biased stretch (low complexity) spans 278 to 296; it reads VRGASGRSATSSSSLTVAE. The short motif at 346–348 is the Nuclear localization signal element; sequence RKR.

Belongs to the HSF family. Class B subfamily. As to quaternary structure, homotrimer. In terms of processing, exhibits temperature-dependent phosphorylation.

It localises to the nucleus. Its function is as follows. Transcriptional regulator that specifically binds DNA of heat shock promoter elements (HSE). This chain is Putative heat stress transcription factor B-4a (HSFB4A), found in Oryza sativa subsp. japonica (Rice).